The primary structure comprises 754 residues: 1,4-alpha-glucan branching enzyme GlgB (754 aa).

Asp431 serves as the catalytic Nucleophile. The active-site Proton donor is the Glu484.

Belongs to the glycosyl hydrolase 13 family. GlgB subfamily. In terms of assembly, monomer.

The enzyme catalyses Transfers a segment of a (1-&gt;4)-alpha-D-glucan chain to a primary hydroxy group in a similar glucan chain.. Its pathway is glycan biosynthesis; glycogen biosynthesis. In terms of biological role, catalyzes the formation of the alpha-1,6-glucosidic linkages in glycogen by scission of a 1,4-alpha-linked oligosaccharide from growing alpha-1,4-glucan chains and the subsequent attachment of the oligosaccharide to the alpha-1,6 position. This Prochlorococcus marinus (strain MIT 9515) protein is 1,4-alpha-glucan branching enzyme GlgB.